A 145-amino-acid chain; its full sequence is Basic phospholipase A2 cPm08 (145 aa).

The signal sequence occupies residues 1–21 (MYPAHLLVLLAVCVSLLGASA). The propeptide occupies 22 to 27 (IPPLPL). Cystine bridges form between Cys38-Cys98, Cys54-Cys144, Cys56-Cys72, Cys71-Cys125, Cys78-Cys118, Cys87-Cys111, and Cys105-Cys116. Residues Tyr55, Gly57, and Gly59 each contribute to the Ca(2+) site. His75 is an active-site residue. Position 76 (Asp76) interacts with Ca(2+). The active site involves Asp119.

It belongs to the phospholipase A2 family. Group I subfamily. D49 sub-subfamily. It depends on Ca(2+) as a cofactor. As to expression, expressed by the venom gland.

Its subcellular location is the secreted. The catalysed reaction is a 1,2-diacyl-sn-glycero-3-phosphocholine + H2O = a 1-acyl-sn-glycero-3-phosphocholine + a fatty acid + H(+). In terms of biological role, PLA2 catalyzes the calcium-dependent hydrolysis of the 2-acyl groups in 3-sn-phosphoglycerides. This chain is Basic phospholipase A2 cPm08, found in Laticauda semifasciata (Black-banded sea krait).